The following is a 328-amino-acid chain: tRNA uridine(34) hydroxylase (328 aa).

A Rhodanese domain is found at 123–217 (SDPETVLIDT…YLEEVPKEKS (95 aa)). Cysteine 177 acts as the Cysteine persulfide intermediate in catalysis. Positions 304 to 328 (AKKLAQLNKQKKQQAKEAARKKAQQ) are disordered. Basic and acidic residues predominate over residues 317–328 (QAKEAARKKAQQ).

This sequence belongs to the TrhO family.

The enzyme catalyses uridine(34) in tRNA + AH2 + O2 = 5-hydroxyuridine(34) in tRNA + A + H2O. Functionally, catalyzes oxygen-dependent 5-hydroxyuridine (ho5U) modification at position 34 in tRNAs. The polypeptide is tRNA uridine(34) hydroxylase (Francisella tularensis subsp. holarctica (strain LVS)).